Reading from the N-terminus, the 2754-residue chain is Neurobeachin-like protein 2 (2754 aa).

2 disordered regions span residues 1298-1338 (TAGS…SEAP) and 1364-1438 (SVGS…QQTS). Composition is skewed to pro residues over residues 1301 to 1323 (SPPP…PPTE) and 1388 to 1400 (TPSP…PFPA). The span at 1425–1437 (GDDTSNTSNPQQT) shows a compositional bias: polar residues. Ser1647 carries the phosphoserine modification. A Phosphothreonine modification is found at Thr1867. The 126-residue stretch at 1915–2040 (EQREKLVLSA…VRNQVYSWLL (126 aa)) folds into the BEACH-type PH domain. The BEACH domain occupies 2053-2345 (RSPQEMLRAS…QLLKEPHPTR (293 aa)). WD repeat units follow at residues 2386 to 2424 (LVLA…SWLP), 2448 to 2491 (RLLS…ALPR), 2494 to 2531 (LLSQ…VWRL), 2544 to 2582 (KPVQ…IHTV), 2589 to 2631 (AALR…TYSL), 2639 to 2674 (KLRA…ILQL), and 2682 to 2717 (PPLP…VVAG). Phosphoserine is present on residues Ser2739 and Ser2742.

It belongs to the WD repeat neurobeachin family. In terms of tissue distribution, expressed in megakaryocytes.

It is found in the endoplasmic reticulum. In terms of biological role, probably involved in thrombopoiesis. Plays a role in the development or secretion of alpha-granules, that contain several growth factors important for platelet biogenesis. This is Neurobeachin-like protein 2 (NBEAL2) from Homo sapiens (Human).